The following is a 197-amino-acid chain: Small ribosomal subunit protein uS4B (197 aa).

The S4 RNA-binding domain maps to 88-150 (SRLDNMVYRM…SRKTEMFVNN (63 aa)).

The protein belongs to the universal ribosomal protein uS4 family. In terms of assembly, part of the 30S ribosomal subunit. Contacts protein S5. The interaction surface between S4 and S5 is involved in control of translational fidelity.

Functionally, one of the primary rRNA binding proteins, it binds directly to 16S rRNA where it nucleates assembly of the body of the 30S subunit. In terms of biological role, with S5 and S12 plays an important role in translational accuracy. The sequence is that of Small ribosomal subunit protein uS4B (rpsD2) from Clostridium perfringens (strain 13 / Type A).